We begin with the raw amino-acid sequence, 97 residues long: Co-chaperonin GroES (97 aa).

Belongs to the GroES chaperonin family. As to quaternary structure, heptamer of 7 subunits arranged in a ring. Interacts with the chaperonin GroEL.

The protein localises to the cytoplasm. Functionally, together with the chaperonin GroEL, plays an essential role in assisting protein folding. The GroEL-GroES system forms a nano-cage that allows encapsulation of the non-native substrate proteins and provides a physical environment optimized to promote and accelerate protein folding. GroES binds to the apical surface of the GroEL ring, thereby capping the opening of the GroEL channel. The polypeptide is Co-chaperonin GroES (Pseudomonas entomophila (strain L48)).